The following is a 419-amino-acid chain: Tyrosine--tRNA ligase (419 aa).

Tyr42 provides a ligand contact to L-tyrosine. The 'HIGH' region motif lies at 47 to 56 (CTAPSLHVGS). L-tyrosine is bound by residues Tyr179 and Gln183. Positions 239-243 (KMGKT) match the 'KMSKS' region motif. An ATP-binding site is contributed by Lys242. The 67-residue stretch at 353–419 (LGVLAAFVKA…RKRHVLLKLV (67 aa)) folds into the S4 RNA-binding domain.

Belongs to the class-I aminoacyl-tRNA synthetase family. TyrS type 1 subfamily. As to quaternary structure, homodimer.

The protein localises to the cytoplasm. It catalyses the reaction tRNA(Tyr) + L-tyrosine + ATP = L-tyrosyl-tRNA(Tyr) + AMP + diphosphate + H(+). In terms of biological role, catalyzes the attachment of tyrosine to tRNA(Tyr) in a two-step reaction: tyrosine is first activated by ATP to form Tyr-AMP and then transferred to the acceptor end of tRNA(Tyr). The polypeptide is Tyrosine--tRNA ligase (Methylocella silvestris (strain DSM 15510 / CIP 108128 / LMG 27833 / NCIMB 13906 / BL2)).